The sequence spans 314 residues: Signal peptidase I (314 aa).

The helical transmembrane segment at 5 to 25 threads the bilayer; the sequence is LTIFLLISTLVTGIFWSFYCI. Residues 26–63 are Cytoplasmic-facing; that stretch reads KSFKNYLINKKIINNNNFHQEKIEKSKNKTYFLKSLAS. Residues 64 to 84 form a helical membrane-spanning segment; the sequence is FFPIFLAIFIIRSFIYEPFQI. Residues 85 to 314 are Extracellular-facing; it reads PSGSMMPTLL…IRINRIGSIH (230 aa). Active-site residues include Ser88 and Lys143.

This sequence belongs to the peptidase S26 family.

Its subcellular location is the cell membrane. The enzyme catalyses Cleavage of hydrophobic, N-terminal signal or leader sequences from secreted and periplasmic proteins.. The sequence is that of Signal peptidase I (lepB) from Buchnera aphidicola subsp. Acyrthosiphon pisum (strain APS) (Acyrthosiphon pisum symbiotic bacterium).